A 456-amino-acid polypeptide reads, in one-letter code: uncharacterized protein (456 aa).

Helical transmembrane passes span Ser12 to Leu32, Phe63 to Ala83, Val86 to Ala106, Trp143 to Phe163, Ile179 to Gly199, Ser208 to Leu228, Ile237 to Leu257, Phe305 to Trp325, Ile348 to Trp368, Leu390 to Ile410, and Val414 to Ile434.

This sequence belongs to the alanine or glycine:cation symporter (AGCS) (TC 2.A.25) family.

Its subcellular location is the cell inner membrane. This is an uncharacterized protein from Haemophilus influenzae (strain ATCC 51907 / DSM 11121 / KW20 / Rd).